Here is a 506-residue protein sequence, read N- to C-terminus: Cysteine--tRNA ligase (506 aa).

Cysteine 34 contributes to the Zn(2+) binding site. The short motif at 36 to 46 is the 'HIGH' region element; it reads PTVYDFAHIGN. Residues cysteine 230, histidine 269, and glutamate 273 each coordinate Zn(2+). Residues 302 to 306 carry the 'KMSKS' region motif; it reads KMSKS. An ATP-binding site is contributed by lysine 305.

The protein belongs to the class-I aminoacyl-tRNA synthetase family. In terms of assembly, monomer. Requires Zn(2+) as cofactor.

It localises to the cytoplasm. It carries out the reaction tRNA(Cys) + L-cysteine + ATP = L-cysteinyl-tRNA(Cys) + AMP + diphosphate. The polypeptide is Cysteine--tRNA ligase (Brucella melitensis biotype 2 (strain ATCC 23457)).